Reading from the N-terminus, the 144-residue chain is Prefoldin subunit alpha (144 aa).

Belongs to the prefoldin alpha subunit family. As to quaternary structure, heterohexamer of two alpha and four beta subunits.

It is found in the cytoplasm. Molecular chaperone capable of stabilizing a range of proteins. Seems to fulfill an ATP-independent, HSP70-like function in archaeal de novo protein folding. This is Prefoldin subunit alpha from Methanococcus aeolicus (strain ATCC BAA-1280 / DSM 17508 / OCM 812 / Nankai-3).